The primary structure comprises 242 residues: DNA repair protein RecO (242 aa).

This sequence belongs to the RecO family.

Its function is as follows. Involved in DNA repair and RecF pathway recombination. In Methylococcus capsulatus (strain ATCC 33009 / NCIMB 11132 / Bath), this protein is DNA repair protein RecO.